The following is a 73-amino-acid chain: Antimicrobial peptide 143 (73 aa).

The signal sequence occupies residues 1–22 (MKVKCLLAVFLIVLIAAEHCQA). Lysine amide is present on lysine 38. Positions 44–73 (ELGTQFRPQQKNFMRREIDLERLFAEMPDY) are excised as a propeptide.

This sequence belongs to the non-disulfide-bridged peptide (NDBP) superfamily. Short antimicrobial peptide (group 4) family. In terms of tissue distribution, expressed by the venom gland.

It localises to the secreted. The protein resides in the target cell membrane. Its function is as follows. Cationic host defense peptide that have antibacterial activity by breaking membranes. Is more effective on Gram-positive than on Gram-negative bacteria. This is Antimicrobial peptide 143 from Lychas mucronatus (Chinese swimming scorpion).